The chain runs to 1207 residues: DNA-directed RNA polymerase subunit beta' (1207 aa).

Positions 60, 62, 75, and 78 each coordinate Zn(2+). Asp449, Asp451, and Asp453 together coordinate Mg(2+). The Zn(2+) site is built by Cys822, Cys896, Cys903, and Cys906.

This sequence belongs to the RNA polymerase beta' chain family. In terms of assembly, the RNAP catalytic core consists of 2 alpha, 1 beta, 1 beta' and 1 omega subunit. When a sigma factor is associated with the core the holoenzyme is formed, which can initiate transcription. It depends on Mg(2+) as a cofactor. Zn(2+) is required as a cofactor.

The catalysed reaction is RNA(n) + a ribonucleoside 5'-triphosphate = RNA(n+1) + diphosphate. In terms of biological role, DNA-dependent RNA polymerase catalyzes the transcription of DNA into RNA using the four ribonucleoside triphosphates as substrates. The polypeptide is DNA-directed RNA polymerase subunit beta' (Staphylococcus aureus (strain MRSA252)).